A 25-amino-acid chain; its full sequence is Cysteine-rich venom protein 25 (25 aa).

The tract at residues 1-25 (NVDFNSESTRRKKKQKEIVDLXNSL) is disordered.

It belongs to the CRISP family. In terms of processing, contains 8 disulfide bonds. Expressed by the venom gland.

It is found in the secreted. This Naja haje haje (Egyptian cobra) protein is Cysteine-rich venom protein 25.